The following is a 186-amino-acid chain: Imidazole glycerol phosphate synthase subunit HisH (186 aa).

The Glutamine amidotransferase type-1 domain occupies 1–186 (MIAIIDYGSG…KLLRNFGELA (186 aa)). Cysteine 72 acts as the Nucleophile in catalysis. Catalysis depends on residues histidine 167 and glutamate 169.

As to quaternary structure, heterodimer of HisH and HisF.

The protein localises to the cytoplasm. The catalysed reaction is 5-[(5-phospho-1-deoxy-D-ribulos-1-ylimino)methylamino]-1-(5-phospho-beta-D-ribosyl)imidazole-4-carboxamide + L-glutamine = D-erythro-1-(imidazol-4-yl)glycerol 3-phosphate + 5-amino-1-(5-phospho-beta-D-ribosyl)imidazole-4-carboxamide + L-glutamate + H(+). It carries out the reaction L-glutamine + H2O = L-glutamate + NH4(+). The protein operates within amino-acid biosynthesis; L-histidine biosynthesis; L-histidine from 5-phospho-alpha-D-ribose 1-diphosphate: step 5/9. In terms of biological role, IGPS catalyzes the conversion of PRFAR and glutamine to IGP, AICAR and glutamate. The HisH subunit catalyzes the hydrolysis of glutamine to glutamate and ammonia as part of the synthesis of IGP and AICAR. The resulting ammonia molecule is channeled to the active site of HisF. This chain is Imidazole glycerol phosphate synthase subunit HisH, found in Picrophilus torridus (strain ATCC 700027 / DSM 9790 / JCM 10055 / NBRC 100828 / KAW 2/3).